Reading from the N-terminus, the 1300-residue chain is MVLLRSGLGTRPGEEDCDGGPSTRTRGHGPLGPNIKSAAGIGGKFPPSPQGRKRKKGPKKSGGKKKKRKVTGEGPGGGEGPGGGEGPGGGEGPGGGEGPGGGEGPGGGEVPGGGEVPGGGEGPGGGEGPGGGEGPGGGEGPGGNSRKRKRGDGSKKHGGKKKKKTTVTGEGGSGPEGPERDDPDGPGSQEGPKREEGPLGPDGPEGPEGPEGEGPEGLEGPKGEGPEGPEGPEGDSPDGPGAQEGPEGLEGPEGDEGPEGPEGPEGEGPEGPEGPKGDSPDGPGAQEGPEGPGGPDEDEGPEEPEGPEGEGPEGPEGEGPEGLEGPEGEGPEGPEGPEGDSPDGPDAQEGPEGPGGPDEDEGPEEPEGPEGEGPEGPEGPEGEGPEGPEGPEGEGPEGLEGPEGEGPEGPEGPEGDSPDGPGAQEGPEGPEGPEGEGPEGLEGPEGEGPEGPEGPEGEGPEGPEGPEGEGPERPEGPEGEGPEGPEGPEGEGPEGPEGPERDSPDGPGAQEGPEGPEGPEGEGPEGLEGPEGEGPEGPEGPEGEGPEGPEGPEGEGPEGPEGPERDSPDGPGAQEGPEGPEGPEEDEGPEGPEGPEGEGPEGPEGEGPEGLEGPEGDEGPEEPEGPEGDSPDGPGAQEVPEGPKGPEGECQSGPSSCEGQQVPKGPDGPEEGSSGPGSSEGEGPSGPGSSEGQQVPKGAEGSEGEGPCRPGGPDEDGDPEGPDGTEGEGPCGPGGPDEDGDPEGPDGTEGEGPCGPGGPDEDGDPEESEGTEDDIKVGLTELLGSMKLDSSDSDSDNSSDSANRRALEGVCGSHSSSKDSDDEEEEEEEEEEEEEEEEDDEEEEEDDEEEEEDDEEEEEDDEEEEEDDEEEEEDDEEEEEEEVIIITSSGEDGCGSSDVVCVGEEKGEGEKGKGREEDGGEGGEGGEGGEGGEGGEGGEGGEGGEGGEGGEGGEGGEGGEGGEGGEGGEGGEGGEGGEGGEGGEGGEGGEGGEGGEGGEGGEGGEGGEGGEGGERGKGGEGGEGGEGGEGGEGSEEDKKPFPCPRSPGVSGFYDLTWSSSDRSTEGSRGSPGPDDLDGRPGSQGPPTLSPQGFPGSGYGSNYDDDREPPVLSPQCGGPSGNEGDESDPDSSREPPDLSPQNPPEGDNGNESDSDPSYQPLGGSSSSSEDDDPGEGTSQGPPKRPPKHHPQTKRAQGKTLGLDPLYDPRQKAATFSLHLGCPTKDPLVRLSRMIRTLHPEGPHSSIFFTGGQYVVVFYVTSYFEAKKLKDFIIREQNRNPLQGRVNVSLARHYPPFPFPHE.

Residues 1–1205 (MVLLRSGLGT…GKTLGLDPLY (1205 aa)) form a disordered region. A compositionally biased stretch (basic residues) spans 51 to 69 (GRKRKKGPKKSGGKKKKRK). The span at 73–143 (EGPGGGEGPG…GPGGGEGPGG (71 aa)) shows a compositional bias: gly residues. Residues 145 to 165 (SRKRKRGDGSKKHGGKKKKKT) show a composition bias toward basic residues. Residues 237 to 246 (PDGPGAQEGP) show a composition bias toward low complexity. Positions 250 to 270 (EGPEGDEGPEGPEGPEGEGPE) are enriched in acidic residues. Over residues 280 to 289 (PDGPGAQEGP) the composition is skewed to low complexity. 2 stretches are compositionally biased toward acidic residues: residues 295 to 343 (PDED…DSPD) and 357 to 417 (PDED…EGDS). Low complexity predominate over residues 418-427 (PDGPGAQEGP). Composition is skewed to acidic residues over residues 431-469 (EGPEGEGPEGLEGPEGEGPEGPEGPEGEGPEGPEGPEGE), 477-494 (PEGEGPEGPEGPEGEGPE), 517-558 (EGPE…EGPE), and 581-630 (EGPE…EGDS). Residues 674-686 (SGPGSSEGEGPSG) show a composition bias toward gly residues. 4 stretches are compositionally biased toward acidic residues: residues 713–726 (PDEDGDPEGPDGTE), 736–749 (PDEDGDPEGPDGTE), 759–772 (PDEDGDPEESEGTE), and 820–883 (SDDE…EEEV). Positions 903-917 (GEEKGEGEKGKGREE) are enriched in basic and acidic residues. 2 stretches are compositionally biased toward gly residues: residues 922–1010 (GGEG…GEGG) and 1021–1031 (GGEGGEGGEGG). A compositionally biased stretch (basic residues) spans 1183-1195 (RPPKHHPQTKRAQ).

This is an uncharacterized protein from Connochaetes taurinus (Blue wildebeest).